We begin with the raw amino-acid sequence, 310 residues long: tRNA uridine(34) hydroxylase (310 aa).

The region spanning 124 to 218 (SDPEVLLIDT…YFEEVPQEES (95 aa)) is the Rhodanese domain. Cys-178 serves as the catalytic Cysteine persulfide intermediate.

It belongs to the TrhO family.

It catalyses the reaction uridine(34) in tRNA + AH2 + O2 = 5-hydroxyuridine(34) in tRNA + A + H2O. Functionally, catalyzes oxygen-dependent 5-hydroxyuridine (ho5U) modification at position 34 in tRNAs. The polypeptide is tRNA uridine(34) hydroxylase (Pseudomonas putida (strain ATCC 700007 / DSM 6899 / JCM 31910 / BCRC 17059 / LMG 24140 / F1)).